The chain runs to 427 residues: 11-beta-hydroxysteroid dehydrogenase type 2 (427 aa).

82-111 (TRAVLITGCDSGFGNATAKKLDAMGFTVLA) provides a ligand contact to NAD(+). Ser219 is a substrate binding site. Tyr232 (proton acceptor) is an active-site residue.

Belongs to the short-chain dehydrogenases/reductases (SDR) family. As to quaternary structure, interacts with ligand-free cytoplasmic NR3C2. As to expression, highly expressed in the kidney and adrenal and at lower levels in the colon.

Its subcellular location is the microsome. It localises to the endoplasmic reticulum. It catalyses the reaction an 11beta-hydroxysteroid + NAD(+) = an 11-oxosteroid + NADH + H(+). The enzyme catalyses corticosterone + NAD(+) = 11-dehydrocorticosterone + NADH + H(+). It carries out the reaction cortisol + NAD(+) = cortisone + NADH + H(+). The catalysed reaction is 11beta,17beta-dihydroxyandrost-4-ene-3-one + NAD(+) = 17beta-hydroxyandrost-4-ene-3,11-dione + NADH + H(+). It catalyses the reaction 11beta-hydroxyandrost-4-ene-3,17-dione + NAD(+) = androst-4-ene-3,11,17-trione + NADH + H(+). It functions in the pathway steroid metabolism. Inhibited by glycyrrhetinic acid, carbenoloxone, 11-alpha-OH-progesterone and 11-beta-OH-progesterone. Its function is as follows. Catalyzes the conversion of biologically active 11beta-hydroxyglucocorticoids (11beta-hydroxysteroid) such as cortisol, to inactive 11-ketoglucocorticoids (11-oxosteroid) such as cortisone, in the presence of NAD(+). Functions as a dehydrogenase (oxidase), thereby decreasing the concentration of active glucocorticoids, thus protecting the nonselective mineralocorticoid receptor from occupation by glucocorticoids. Plays an important role in maintaining glucocorticoids balance during preimplantation and protects the fetus from excessive maternal corticosterone exposure. Catalyzes the oxidation of 11beta-hydroxytestosterone (11beta,17beta-dihydroxyandrost-4-ene-3-one) to 11-ketotestosterone (17beta-hydroxyandrost-4-ene-3,11-dione), a major bioactive androgen. Catalyzes the conversion of 11beta-hydroxyandrostenedione (11beta-hydroxyandrost-4-ene-3,17-dione) to 11-ketoandrostenedione (androst-4-ene-3,11,17-trione), which can be further metabolized to 11-ketotestosterone. Converts 7-beta-25-dihydroxycholesterol to 7-oxo-25-hydroxycholesterol in vitro. 7-beta-25-dihydroxycholesterol (not 7-oxo-25-hydroxycholesterol) acts as a ligand for the G-protein-coupled receptor (GPCR) Epstein-Barr virus-induced gene 2 (EBI2) and may thereby regulate immune cell migration. May protect ovulating oocytes and fertilizing spermatozoa from the adverse effects of cortisol. This is 11-beta-hydroxysteroid dehydrogenase type 2 (HSD11B2) from Ovis aries (Sheep).